A 432-amino-acid chain; its full sequence is Trigger factor (432 aa).

A PPIase FKBP-type domain is found at 161 to 246 (EDRVTLDFTG…LKKVEERELP (86 aa)).

The protein belongs to the FKBP-type PPIase family. Tig subfamily.

The protein localises to the cytoplasm. The catalysed reaction is [protein]-peptidylproline (omega=180) = [protein]-peptidylproline (omega=0). Its function is as follows. Involved in protein export. Acts as a chaperone by maintaining the newly synthesized protein in an open conformation. Functions as a peptidyl-prolyl cis-trans isomerase. This Salmonella arizonae (strain ATCC BAA-731 / CDC346-86 / RSK2980) protein is Trigger factor.